We begin with the raw amino-acid sequence, 135 residues long: Lymphocyte antigen 6 complex locus protein G6d (135 aa).

An N-terminal signal peptide occupies residues 1-19 (MNSQLVGILLSALLGVALG). The region spanning 22–121 (TRCYDCGGGP…ASSVTPLCIL (100 aa)) is the UPAR/Ly6 domain. 5 cysteine pairs are disulfide-bonded: C24–C48, C27–C35, C42–C76, C82–C101, and C102–C107. O-linked (GalNAc...) threonine glycosylation occurs at T68. A lipid anchor (GPI-anchor amidated asparagine) is attached at N108. A propeptide spans 109–135 (SAVASSVTPLCILAAAVTTLAWLLPGL) (removed in mature form).

Homodimer. In terms of processing, O-glycosylated. Expressed in embryonic tissue and adult lung, kidney, brain, liver and spleen.

Its subcellular location is the cell membrane. The protein localises to the cell projection. It localises to the filopodium. The protein is Lymphocyte antigen 6 complex locus protein G6d (Ly6g6d) of Mus musculus (Mouse).